Here is a 503-residue protein sequence, read N- to C-terminus: Lysine--tRNA ligase (503 aa).

Glu-414 and Glu-421 together coordinate Mg(2+).

This sequence belongs to the class-II aminoacyl-tRNA synthetase family. Homodimer. Requires Mg(2+) as cofactor.

It is found in the cytoplasm. The catalysed reaction is tRNA(Lys) + L-lysine + ATP = L-lysyl-tRNA(Lys) + AMP + diphosphate. The polypeptide is Lysine--tRNA ligase (Neisseria meningitidis serogroup B (strain ATCC BAA-335 / MC58)).